The sequence spans 559 residues: Amino-acid acetyltransferase, mitochondrial (559 aa).

Residues 162 to 188 are disordered; the sequence is RLGPKPGSEDPTSELDFTPPETHTLPP. An N-acetyltransferase domain is found at 362 to 538; it reads LPVQVFHSVS…GSAGLSYVED (177 aa).

It belongs to the acetyltransferase family.

It is found in the mitochondrion. It catalyses the reaction L-glutamate + acetyl-CoA = N-acetyl-L-glutamate + CoA + H(+). It participates in amino-acid biosynthesis; L-arginine biosynthesis; N(2)-acetyl-L-ornithine from L-glutamate: step 1/4. N-acetylglutamate synthase involved in arginine biosynthesis. This Laccaria bicolor (strain S238N-H82 / ATCC MYA-4686) (Bicoloured deceiver) protein is Amino-acid acetyltransferase, mitochondrial (ARG2).